Reading from the N-terminus, the 223-residue chain is MEVKIEESWKEMLKSEFCKGYFKRLVSFIKNEYKTKKDKIFPPPRLIFNAFDTLPFKDIKVVILGQDPYHGKGQANGLAFSVNSDIKIPPSLQNIFKEIERSLKIKTIPNGDLTRWAEQGTFLLNSILTVEEGRPSSHKDIGWEIFTNEVIKIISKNLNNVVFMLWGNFAKGKKELIDTSKHLILETSHPSPYSAHNGFLGSNHFSKTLRYLQEHNKTTINFQ.

The active-site Proton acceptor is D67.

Belongs to the uracil-DNA glycosylase (UDG) superfamily. UNG family.

Its subcellular location is the cytoplasm. It catalyses the reaction Hydrolyzes single-stranded DNA or mismatched double-stranded DNA and polynucleotides, releasing free uracil.. Functionally, excises uracil residues from the DNA which can arise as a result of misincorporation of dUMP residues by DNA polymerase or due to deamination of cytosine. The protein is Uracil-DNA glycosylase of Borrelia duttonii (strain Ly).